The sequence spans 42 residues: Photosystem I reaction center subunit IX (42 aa).

The chain crosses the membrane as a helical span at residues 7-27 (YLSTAPVLAALSLGFLAGLLI).

Belongs to the PsaJ family.

It is found in the plastid. It localises to the chloroplast thylakoid membrane. Its function is as follows. May help in the organization of the PsaE and PsaF subunits. The sequence is that of Photosystem I reaction center subunit IX from Cryptomeria japonica (Japanese cedar).